Consider the following 235-residue polypeptide: Urease accessory protein UreF (235 aa).

It belongs to the UreF family. UreD, UreF and UreG form a complex that acts as a GTP-hydrolysis-dependent molecular chaperone, activating the urease apoprotein by helping to assemble the nickel containing metallocenter of UreC. The UreE protein probably delivers the nickel.

Its subcellular location is the cytoplasm. In terms of biological role, required for maturation of urease via the functional incorporation of the urease nickel metallocenter. The protein is Urease accessory protein UreF of Haemophilus influenzae (strain PittEE).